A 537-amino-acid chain; its full sequence is Probable protein kinase UbiB (537 aa).

The chain crosses the membrane as a helical span at residues 30 to 47; the sequence is LLPWWLRALGYLLPWRWL. Residues 126-490 enclose the Protein kinase domain; that stretch reads RFDSEPLASA…KRERHDHHLL (365 aa). ATP-binding positions include 132-140 and lysine 154; that span reads LASASVAQV. Catalysis depends on aspartate 289, which acts as the Proton acceptor. 2 helical membrane passes run 489-507 and 513-530; these read LLRL…LALQ and ANAW…YLLV.

It belongs to the ABC1 family. UbiB subfamily.

The protein localises to the cell inner membrane. It functions in the pathway cofactor biosynthesis; ubiquinone biosynthesis [regulation]. Is probably a protein kinase regulator of UbiI activity which is involved in aerobic coenzyme Q (ubiquinone) biosynthesis. The sequence is that of Probable protein kinase UbiB from Azotobacter vinelandii (strain DJ / ATCC BAA-1303).